Consider the following 291-residue polypeptide: 4,5:9,10-diseco-3-hydroxy-5,9,17-trioxoandrosta-1(10),2-diene-4-oate hydrolase (291 aa).

Substrate is bound by residues 45 to 46 (GG), N54, N113, L115, and R192. H269 serves as the catalytic Proton acceptor. W270 contacts substrate.

This sequence belongs to the AB hydrolase superfamily. HsaD family. In terms of assembly, homodimer.

It catalyses the reaction (1E,2Z)-3-hydroxy-5,9,17-trioxo-4,5:9,10-disecoandrosta-1(10),2-dien-4-oate + H2O = 3-[(3aS,4S,7aS)-7a-methyl-1,5-dioxo-octahydro-1H-inden-4-yl]propanoate + (2Z,4Z)-2-hydroxyhexa-2,4-dienoate + H(+). It carries out the reaction 2,6-dioxo-6-phenylhexa-3-enoate + H2O = 2-oxopent-4-enoate + benzoate + H(+). It participates in lipid metabolism; steroid biosynthesis. Functionally, catalyzes the hydrolysis of a carbon-carbon bond in 4,5: 9,10-diseco-3-hydroxy-5,9,17-trioxoandrosta-1(10),2-diene-4-oate (4,9-DSHA) to yield 9,17-dioxo-1,2,3,4,10,19-hexanorandrostan-5-oate (DOHNAA) and 2-hydroxy-hexa-2,4-dienoate (HHD). Is also able to catalyze the hydrolysis of 2-hydroxy-6-oxo-6-phenylhexa-2,4-dienoic acid (HOPDA) and the synthetic analog 8-(2-chlorophenyl)-2-hydroxy-5-methyl-6-oxoocta-2,4-dienoic acid (HOPODA). The protein is 4,5:9,10-diseco-3-hydroxy-5,9,17-trioxoandrosta-1(10),2-diene-4-oate hydrolase (hsaD) of Mycobacterium tuberculosis (strain ATCC 25618 / H37Rv).